A 291-amino-acid chain; its full sequence is Gamma-soluble NSF attachment protein (291 aa).

The protein belongs to the SNAP family.

It localises to the membrane. Its function is as follows. Required for vesicular transport between the endoplasmic reticulum and the Golgi apparatus. Binds to SNARE complex and then recruits NSF to disassemble it. This chain is Gamma-soluble NSF attachment protein (GSNAP), found in Arabidopsis thaliana (Mouse-ear cress).